The following is a 412-amino-acid chain: FAD-dependent monooxygenase nscC (412 aa).

A signal peptide spans 1 to 21 (MGKQQETILIIGAGIAGLTTS). Residues glutamate 35 and alanine 46 each contribute to the FAD site. Residue asparagine 92 is glycosylated (N-linked (GlcNAc...) asparagine). Arginine 119 lines the FAD pocket. Asparagine 170 and asparagine 231 each carry an N-linked (GlcNAc...) asparagine glycan. FAD contacts are provided by aspartate 326 and glycine 339.

Belongs to the paxM FAD-dependent monooxygenase family. It depends on FAD as a cofactor.

The protein operates within secondary metabolite biosynthesis. FAD-dependent monooxygenase; part of the gene cluster that mediates the biosynthesis of neosartoricin B, a prenylated anthracenone that probably exhibits T-cell antiproliferative activity, suggestive of a physiological role as an immunosuppressive agent. The non-reducing polyketide synthase nscA probably synthesizes and cyclizes the decaketide backbone. The hydrolase nscB then mediates the product release through hydrolysis followed by spontaneous decarboxylation. The prenyltransferase nscD catalyzes the addition of the dimethylallyl group to the aromatic C5. The FAD-dependent monooxygenase nscC is then responsible for the stereospecific hydroxylation at C2. Neosartoricin B can be converted into two additional compounds neosartoricins C and D. Neosartoricin C is a spirocyclic compound that is cyclized through the attack of C3 hydroxyl on C14, followed by dehydration. On the other hand, neosartoricin D is a further cyclized compound in which attack of C2 on C14 in neosartoricin C results in the formation of the acetal-containing dioxabicyclo-octanone ring. Both of these compounds are novel and possibly represent related metabolites of the gene cluster. In Arthroderma benhamiae (strain ATCC MYA-4681 / CBS 112371) (Trichophyton mentagrophytes), this protein is FAD-dependent monooxygenase nscC.